Here is an 828-residue protein sequence, read N- to C-terminus: Periplasmic nitrate reductase (828 aa).

The segment at residues 1–31 (MKLSRRSFMKANAVAAAAAAAGLSVPGVARA) is a signal peptide (tat-type signal). Residues 39–95 (IKWDKAPCRFCGTGCGVLVGTQQGRVVACQGDPDAPVNRGLNCIKGYFLPKIMYGKD) form the 4Fe-4S Mo/W bis-MGD-type domain. The [4Fe-4S] cluster site is built by cysteine 46, cysteine 49, cysteine 53, and cysteine 81. Residues lysine 83, glutamine 150, asparagine 175, cysteine 179, 212–219 (WGANMAEM), 243–247 (STYQH), 262–264 (QSD), methionine 372, glutamine 376, asparagine 482, 508–509 (SD), lysine 531, aspartate 558, and 718–727 (TGRVLEHWHT) contribute to the Mo-bis(molybdopterin guanine dinucleotide) site. Substrate is bound at residue phenylalanine 794. Positions 802 and 819 each coordinate Mo-bis(molybdopterin guanine dinucleotide).

Belongs to the prokaryotic molybdopterin-containing oxidoreductase family. NasA/NapA/NarB subfamily. Component of the periplasmic nitrate reductase NapAB complex composed of NapA and NapB. [4Fe-4S] cluster is required as a cofactor. The cofactor is Mo-bis(molybdopterin guanine dinucleotide). In terms of processing, predicted to be exported by the Tat system. The position of the signal peptide cleavage has not been experimentally proven.

It localises to the periplasm. It catalyses the reaction 2 Fe(II)-[cytochrome] + nitrate + 2 H(+) = 2 Fe(III)-[cytochrome] + nitrite + H2O. Functionally, catalytic subunit of the periplasmic nitrate reductase complex NapAB. Receives electrons from NapB and catalyzes the reduction of nitrate to nitrite. In Escherichia coli O8 (strain IAI1), this protein is Periplasmic nitrate reductase.